Reading from the N-terminus, the 1495-residue chain is Terminal uridylyltransferase 7 (1495 aa).

Disordered stretches follow at residues 1–30 (MGDTAKPYFVKRTKDRGTMDDDDFRRGHPQ), 43–69 (HGSKMEKGLQKKKITPGNYGNTPRKGP), 89–140 (WMND…EDGY), and 162–205 (LETT…PVID). The segment covering 15–26 (DRGTMDDDDFRR) has biased composition (basic and acidic residues). Phosphothreonine is present on residues Thr-57 and Thr-64. 2 stretches are compositionally biased toward basic and acidic residues: residues 92–118 (DSHKDQSKRWLSDEHTGNSDNWREFKP) and 128–140 (QRKDSFQENEDGY). Residues Ser-132 and Ser-172 each carry the phosphoserine modification. Positions 178–187 (QRSRPRKPRK) are enriched in basic residues. A Matrin-type zinc finger spans residues 244-274 (YTCRLCDVLIESIAFAHKHIKEKRHKKNIKE). A PAP-associated 1 domain is found at 551-600 (VGQLWVELLRFYALEFNLADLVISIRVKELVSRELKDWPKKRIAIEDPYS). A Phosphoserine modification is found at Ser-600. The span at 734–756 (DDYKGDKVYHPETGRKNEKEKVG) shows a compositional bias: basic and acidic residues. 2 disordered regions span residues 734–757 (DDYKGDKVYHPETGRKNEKEKVGR) and 831–898 (THSV…EDDE). Over residues 831–841 (THSVQGQTSEM) the composition is skewed to polar residues. Composition is skewed to acidic residues over residues 843-859 (PSDEEEEDDEEEEEEEE), 868-880 (EDEDGMANEDELD), and 887-898 (GDEDALSEEDDE). Ser-844 bears the Phosphoserine mark. Phosphoserine occurs at positions 893 and 939. The interval 951 to 1495 (SKLIFTKGKS…ASAKRTQQES (545 aa)) is sufficient for monouridylation activity. The CCHC-type 1 zinc finger occupies 963 to 980 (VVCSLCKREGHLKKDCPE). Residues 1047–1050 (SSKN), 1057–1060 (SDLD), Asn-1130, Lys-1152, 1170–1174 (SYAYT), and His-1286 each bind UTP. Residues Asp-1058 and Asp-1060 each coordinate Mg(2+). One can recognise a PAP-associated 2 domain in the interval 1233–1286 (SVGQLWLGLLRFYTEEFDFKEHVISIRRKSLLTTFKKQWTSKYIVIEDPFDLNH). Residues 1345 to 1362 (RCCRICGKIGHFMKDCPM) form a CCHC-type 2 zinc finger. 2 disordered regions span residues 1367 to 1424 (RRRR…MRAA) and 1466 to 1495 (CPQFKGSSGSLSSKYMTQGKASAKRTQQES). Basic and acidic residues predominate over residues 1381–1410 (PENKEKRSKEDKEIHNKYTEREVSTKEDKP). The CCHC-type 3 zinc-finger motif lies at 1451–1468 (KRCFICGREGHIKKECPQ). Positions 1470–1485 (KGSSGSLSSKYMTQGK) are enriched in polar residues.

It belongs to the DNA polymerase type-B-like family. As to quaternary structure, interacts with MOV10; the interaction is RNA-dependent. Requires Mg(2+) as cofactor. Mn(2+) serves as cofactor.

It localises to the cytoplasm. It catalyses the reaction RNA(n) + UTP = RNA(n)-3'-uridine ribonucleotide + diphosphate. Uridylyltransferase that mediates the terminal uridylation of mRNAs with short (less than 25 nucleotides) poly(A) tails, hence facilitating global mRNA decay. Essential for both oocyte maturation and fertility. Through 3' terminal uridylation of mRNA, sculpts, with TUT7, the maternal transcriptome by eliminating transcripts during oocyte growth. Involved in microRNA (miRNA)-induced gene silencing through uridylation of deadenylated miRNA targets. Also functions as an integral regulator of microRNA biogenesiS using 3 different uridylation mechanisms. Acts as a suppressor of miRNA biogenesis by mediating the terminal uridylation of some miRNA precursors, including that of let-7 (pre-let-7). Uridylated pre-let-7 RNA is not processed by Dicer and undergo degradation. Pre-let-7 uridylation is strongly enhanced in the presence of LIN28A. In the absence of LIN28A, TUT7 and TUT4 monouridylate group II pre-miRNAs, which includes most of pre-let7 members, that shapes an optimal 3' end overhang for efficient processing. Add oligo-U tails to truncated pre-miRNAS with a 5' overhang which may promote rapid degradation of non-functional pre-miRNA species. Does not play a role in replication-dependent histone mRNA degradation. Due to functional redundancy between TUT4 and TUT7, the identification of the specific role of each of these proteins is difficult. TUT4 and TUT7 restrict retrotransposition of long interspersed element-1 (LINE-1) in cooperation with MOV10 counteracting the RNA chaperonne activity of L1RE1. TUT7 uridylates LINE-1 mRNAs in the cytoplasm which inhibits initiation of reverse transcription once in the nucleus, whereas uridylation by TUT4 destabilizes mRNAs in cytoplasmic ribonucleoprotein granules. This chain is Terminal uridylyltransferase 7, found in Homo sapiens (Human).